The sequence spans 227 residues: Ureidoacrylate amidohydrolase RutB (227 aa).

Asp-22 acts as the Proton acceptor in catalysis. The active site involves Lys-131. Cys-164 serves as the catalytic Nucleophile.

It belongs to the isochorismatase family. RutB subfamily.

It carries out the reaction (Z)-3-ureidoacrylate + H2O + H(+) = (Z)-3-aminoacrylate + NH4(+) + CO2. The catalysed reaction is (Z)-3-ureidoacrylate + H2O = (Z)-3-aminoacrylate + carbamate + H(+). The enzyme catalyses (Z)-2-methylureidoacrylate + H2O + H(+) = (Z)-2-methylaminoacrylate + NH4(+) + CO2. Functionally, hydrolyzes ureidoacrylate to form aminoacrylate and carbamate. The carbamate hydrolyzes spontaneously, thereby releasing one of the nitrogen atoms of the pyrimidine ring as ammonia and one of its carbon atoms as CO2. The chain is Ureidoacrylate amidohydrolase RutB from Azorhizobium caulinodans (strain ATCC 43989 / DSM 5975 / JCM 20966 / LMG 6465 / NBRC 14845 / NCIMB 13405 / ORS 571).